The sequence spans 98 residues: MPRSLKKGPFIESKLEKRIAALNSKDEKKVVKTWSRSSMIAPEFVGHTIAVHNGKSHIPVYVSENMVGHKLGEFAPTRTYRGHAGGKSEKGGSAPRKK.

Residues 77 to 98 are disordered; that stretch reads TRTYRGHAGGKSEKGGSAPRKK.

It belongs to the universal ribosomal protein uS19 family.

Functionally, protein S19 forms a complex with S13 that binds strongly to the 16S ribosomal RNA. The sequence is that of Small ribosomal subunit protein uS19 from Chlorobium phaeobacteroides (strain BS1).